A 561-amino-acid polypeptide reads, in one-letter code: Probable oligo-1,6-glucosidase 2 (561 aa).

Asp199 functions as the Nucleophile in the catalytic mechanism. Catalysis depends on Glu255, which acts as the Proton donor.

It belongs to the glycosyl hydrolase 13 family.

Its subcellular location is the cytoplasm. The enzyme catalyses Hydrolysis of (1-&gt;6)-alpha-D-glucosidic linkages in some oligosaccharides produced from starch and glycogen by alpha-amylase, and in isomaltose.. This is Probable oligo-1,6-glucosidase 2 (ycdG) from Bacillus subtilis (strain 168).